Reading from the N-terminus, the 230-residue chain is Pyridoxine/pyridoxamine 5'-phosphate oxidase (230 aa).

Residues arginine 21–tyrosine 24 and lysine 87 each bind substrate. Residues arginine 82–lysine 87, tyrosine 97–threonine 98, lysine 104, and glutamine 126 contribute to the FMN site. Substrate contacts are provided by tyrosine 144, arginine 148, and serine 152. FMN-binding positions include glutamine 161–serine 162 and tryptophan 207. Substrate is bound at residue arginine 213 to histidine 215. Arginine 217 provides a ligand contact to FMN.

Belongs to the pyridoxamine 5'-phosphate oxidase family. As to quaternary structure, homodimer. The cofactor is FMN.

It carries out the reaction pyridoxamine 5'-phosphate + O2 + H2O = pyridoxal 5'-phosphate + H2O2 + NH4(+). The enzyme catalyses pyridoxine 5'-phosphate + O2 = pyridoxal 5'-phosphate + H2O2. Its pathway is cofactor metabolism; pyridoxal 5'-phosphate salvage; pyridoxal 5'-phosphate from pyridoxamine 5'-phosphate: step 1/1. The protein operates within cofactor metabolism; pyridoxal 5'-phosphate salvage; pyridoxal 5'-phosphate from pyridoxine 5'-phosphate: step 1/1. Functionally, catalyzes the oxidation of either pyridoxine 5'-phosphate (PNP) or pyridoxamine 5'-phosphate (PMP) into pyridoxal 5'-phosphate (PLP). This is Pyridoxine/pyridoxamine 5'-phosphate oxidase from Mycolicibacterium smegmatis (strain ATCC 700084 / mc(2)155) (Mycobacterium smegmatis).